The chain runs to 275 residues: 2,3,4,5-tetrahydropyridine-2,6-dicarboxylate N-succinyltransferase (275 aa).

Residues Arg-108 and Asp-145 each coordinate substrate.

Belongs to the transferase hexapeptide repeat family. As to quaternary structure, homotrimer.

It is found in the cytoplasm. It catalyses the reaction (S)-2,3,4,5-tetrahydrodipicolinate + succinyl-CoA + H2O = (S)-2-succinylamino-6-oxoheptanedioate + CoA. The protein operates within amino-acid biosynthesis; L-lysine biosynthesis via DAP pathway; LL-2,6-diaminopimelate from (S)-tetrahydrodipicolinate (succinylase route): step 1/3. The protein is 2,3,4,5-tetrahydropyridine-2,6-dicarboxylate N-succinyltransferase of Roseobacter denitrificans (strain ATCC 33942 / OCh 114) (Erythrobacter sp. (strain OCh 114)).